The primary structure comprises 245 residues: MPRYKLLIEYDGTPFCGWQYQDNGPSVQGALEDAVAALAGTHVRVHGAGRTDAGVHALGQVAHIDLEKSYRTDQVRDALNAHLRPHPIGVLSAEIVPETFESRFSAVKRHYIYRISNRRANLALDLHRAWRIARTLDVAAMHEAAQVLVGRHDFTTFRDTECQAKSPEKTLDQLDVTREGDAVSIVTSARSFLHSQVRSMVGSLVWVGHGRWTIADMRNALAARDRTACGPVAPPEGLYLVRVDY.

The active-site Nucleophile is the Asp-52. Tyr-111 serves as a coordination point for substrate.

This sequence belongs to the tRNA pseudouridine synthase TruA family. Homodimer.

The enzyme catalyses uridine(38/39/40) in tRNA = pseudouridine(38/39/40) in tRNA. Formation of pseudouridine at positions 38, 39 and 40 in the anticodon stem and loop of transfer RNAs. The chain is tRNA pseudouridine synthase A from Afipia carboxidovorans (strain ATCC 49405 / DSM 1227 / KCTC 32145 / OM5) (Oligotropha carboxidovorans).